Consider the following 193-residue polypeptide: MLQNLVLAAAEEGAEHEDSVLVPPLAELIVGLLAFGLLVGFFFWKIYPQIRKTYAERAERIEGGLNRAERAEREAQALLEQYRSQLAEARSEAARIREDAQAQGRQIVEELRTQVQQEVAEIRERADAALVAERAQVVASVRREIGEIALELATRIVGRELENDTRQRQLVDDFIAGLDEAPQPDAVPAGPGV.

Residues 24–44 (PLAELIVGLLAFGLLVGFFFW) traverse the membrane as a helical segment.

Belongs to the ATPase B chain family. As to quaternary structure, F-type ATPases have 2 components, F(1) - the catalytic core - and F(0) - the membrane proton channel. F(1) has five subunits: alpha(3), beta(3), gamma(1), delta(1), epsilon(1). F(0) has three main subunits: a(1), b(2) and c(10-14). The alpha and beta chains form an alternating ring which encloses part of the gamma chain. F(1) is attached to F(0) by a central stalk formed by the gamma and epsilon chains, while a peripheral stalk is formed by the delta and b chains.

Its subcellular location is the cell membrane. In terms of biological role, f(1)F(0) ATP synthase produces ATP from ADP in the presence of a proton or sodium gradient. F-type ATPases consist of two structural domains, F(1) containing the extramembraneous catalytic core and F(0) containing the membrane proton channel, linked together by a central stalk and a peripheral stalk. During catalysis, ATP synthesis in the catalytic domain of F(1) is coupled via a rotary mechanism of the central stalk subunits to proton translocation. Functionally, component of the F(0) channel, it forms part of the peripheral stalk, linking F(1) to F(0). The chain is ATP synthase subunit b from Parafrankia sp. (strain EAN1pec).